The sequence spans 477 residues: MASDAPTGGSLADRISNPAETTEPVADKAQLDGAASNQGGSDLAEPEYNVEVKLSDLQADPNNPLYSVKNFEDLGLDPRILQGLSAMNFRKPSKIQERALPLLMGNPPKNLVGQSQSGTGKTAAFVLNILSRLDLSSEQAQKTPQALILAPTRELARQIVGVIQVMGKFLDGLHIGTAVPADTNARPTRMEASVVVGTPGTVMDMIKKRIMVAAKLKVIVLDEADNMLDQQGLGDQCIRVKALLPRDIQVVLFSATFPAHVHQYASKFAPAANELTLQHEELTVEGIKQLYLDCASEEDKYRTLVQLYGLLTVGSSIIFVKTRASAVEIERRMVAEGHTVASLTGGIEGSQRDQIIDQFRAGHAKVLITTNVLARGIDVSTVSMVINYDIPELHQPPNRPRQADFQTYLHRIGRTGRFGRVGVSISFVSNREEWEMLNQIQKYFNTDIQRIDTKDWDEVEDIIKKTIKNTRAQAGFR.

The disordered stretch occupies residues 1-43 (MASDAPTGGSLADRISNPAETTEPVADKAQLDGAASNQGGSDL). Positions 69–97 (KNFEDLGLDPRILQGLSAMNFRKPSKIQE) match the Q motif motif. In terms of domain architecture, Helicase ATP-binding spans 102–275 (LLMGNPPKNL…SKFAPAANEL (174 aa)). ATP is bound at residue 115-122 (SQSGTGKT). The DEAD box signature appears at 222–225 (DEAD). Positions 303-459 (TLVQLYGLLT…RIDTKDWDEV (157 aa)) constitute a Helicase C-terminal domain.

This sequence belongs to the DEAD box helicase family. DDX19/DBP5 subfamily. As to quaternary structure, associates with the nuclear pore complex.

It is found in the cytoplasm. The protein resides in the nucleus. Its subcellular location is the nuclear pore complex. It localises to the nucleus membrane. It carries out the reaction ATP + H2O = ADP + phosphate + H(+). Functionally, ATP-dependent RNA helicase associated with the nuclear pore complex and essential for mRNA export from the nucleus. May participate in a terminal step of mRNA export through the removal of proteins that accompany mRNA through the nucleopore complex. May also be involved in early transcription. The protein is ATP-dependent RNA helicase dbp5 (dbp5) of Emericella nidulans (strain FGSC A4 / ATCC 38163 / CBS 112.46 / NRRL 194 / M139) (Aspergillus nidulans).